We begin with the raw amino-acid sequence, 221 residues long: Putative hemin import ATP-binding protein HrtA (221 aa).

Positions 3–221 constitute an ABC transporter domain; that stretch reads LVVEDIVKNF…IELEDGKITD (219 aa). 39 to 46 is a binding site for ATP; the sequence is GASGSGKT.

The protein belongs to the ABC transporter superfamily. HrtA family. As to quaternary structure, the complex is composed of two ATP-binding proteins (HrtA), two transmembrane proteins (HrtB) and a solute-binding protein.

The protein localises to the cell membrane. Its function is as follows. Part of the ABC transporter complex hrt involved in hemin import. Responsible for energy coupling to the transport system. This Staphylococcus aureus (strain bovine RF122 / ET3-1) protein is Putative hemin import ATP-binding protein HrtA (hrtA).